Reading from the N-terminus, the 189-residue chain is Probable nicotinate-nucleotide adenylyltransferase (189 aa).

It belongs to the NadD family.

The enzyme catalyses nicotinate beta-D-ribonucleotide + ATP + H(+) = deamido-NAD(+) + diphosphate. It participates in cofactor biosynthesis; NAD(+) biosynthesis; deamido-NAD(+) from nicotinate D-ribonucleotide: step 1/1. Catalyzes the reversible adenylation of nicotinate mononucleotide (NaMN) to nicotinic acid adenine dinucleotide (NaAD). The polypeptide is Probable nicotinate-nucleotide adenylyltransferase (Bacillus cereus (strain AH187)).